The primary structure comprises 1143 residues: DNA-directed RNA polymerase subunit beta (1143 aa).

It belongs to the RNA polymerase beta chain family. As to quaternary structure, in plastids the minimal PEP RNA polymerase catalytic core is composed of four subunits: alpha, beta, beta', and beta''. When a (nuclear-encoded) sigma factor is associated with the core the holoenzyme is formed, which can initiate transcription.

It is found in the plastid. The protein resides in the chloroplast. It catalyses the reaction RNA(n) + a ribonucleoside 5'-triphosphate = RNA(n+1) + diphosphate. Functionally, DNA-dependent RNA polymerase catalyzes the transcription of DNA into RNA using the four ribonucleoside triphosphates as substrates. The polypeptide is DNA-directed RNA polymerase subunit beta (Porphyra purpurea (Red seaweed)).